Consider the following 152-residue polypeptide: TOMM20-like protein 1 (152 aa).

Residues 1 to 9 (MPSVRSLLR) are Mitochondrial intermembrane-facing. A helical membrane pass occupies residues 10–29 (LLAAAAACGAFAFLGYCIYL). At 30–152 (NRKRRGDPAF…EQDCLEDDPD (123 aa)) the chain is on the cytoplasmic side. The segment at 43 to 62 (LRDKRRAEPQKAEEQGTQLW) is disordered. The segment covering 47–56 (RRAEPQKAEE) has biased composition (basic and acidic residues).

This sequence belongs to the Tom20 family.

The protein resides in the mitochondrion outer membrane. The polypeptide is TOMM20-like protein 1 (TOMM20L) (Homo sapiens (Human)).